The primary structure comprises 262 residues: Intercellular adhesion molecule 4 (262 aa).

The first 22 residues, 1–22, serve as a signal peptide directing secretion; it reads MESALLLPSLLLVAAYPRGGSP. Residues 23–231 lie on the Extracellular side of the membrane; the sequence is QQEWMQSPPA…LTVLALSPAS (209 aa). Ig-like C2-type domains follow at residues 54 to 116 and 138 to 209; these read GGSA…TREA and GHKY…LNLD. Asn60, Asn84, and Asn182 each carry an N-linked (GlcNAc...) asparagine glycan. Cystine bridges form between Cys61–Cys105, Cys61–Cys109, Cys65–Cys109, and Cys145–Cys202. Residues 232–252 form a helical membrane-spanning segment; the sequence is IALASTSIATLVGILLAVGAV. The Cytoplasmic portion of the chain corresponds to 253-262; that stretch reads YVRKYLAVQT.

This sequence belongs to the immunoglobulin superfamily. ICAM family.

It is found in the cell membrane. The protein resides in the secreted. Its function is as follows. Adhesion molecule that binds to leukocyte adhesion LFA-1 protein LFA-1 (integrin alpha-L/beta-2). ICAM4 is also a ligand for alpha-4/beta-1 and alpha-V integrins. Isoform 2 may modulate binding of membrane-associated ICAM4. This is Intercellular adhesion molecule 4 (Icam4) from Mus musculus (Mouse).